The following is a 310-amino-acid chain: Manganese ABC transporter substrate-binding lipoprotein PsaA (310 aa).

The N-terminal stretch at 1 to 20 is a signal peptide; it reads MKKIASVLALFVALLFGLLA. C21 is lipidated: N-palmitoyl cysteine. Residue C21 is the site of S-diacylglycerol cysteine attachment. 4 residues coordinate Mn(2+): H68, H140, E206, and D281.

This sequence belongs to the bacterial solute-binding protein 9 family. Lipoprotein receptor antigen (Lrai) subfamily.

Its subcellular location is the cell membrane. In terms of biological role, part of the ATP-binding cassette (ABC) transport system PsaABC involved in manganese import. Binds manganese with high affinity and specificity and delivers it to the membrane permease for translocation into the cytoplasm. Also acts as an adhesin which is involved on adherence to extracellular matrix. In Streptococcus pneumoniae, this protein is Manganese ABC transporter substrate-binding lipoprotein PsaA.